The following is a 468-amino-acid chain: MGEIVVLSSDDGMETIKNRVKSSEVVQWEKYLPKTVLRVLLVESDYSTRQIITALLRKCCYKVVAVSDGLAAWEVLKEKSHNIDLILTELDLPSISGFALLALVMEHEACKNIPVIMMSSQDSIKMVLKCMLRGAADYLIKPMRKNELKNLWQHVWRRLTLRDDPTAHAQSLPASQHNLEDTDETCEDSRYHSDQGSGAQAINYNGHNKLMENGKSVDERDEFKETFDVTMDLIGGIDKRPDSIYKDKSRDECVGPELGLSLKRSCSVSFENQDESKHQKLSLSDASAFSRFEESKSAEKAVVALEESTSGEPKTPTESHEKLRKVTSDQGSATTSSNQENIGSSSVSFRNQVLQSTVTNQKQDSPIPVESNREKAASKEVEAGSQSTNEGIAGQSSSTEKPKEEESAKQRWSRSQREAALMKFRLKRKDRCFDKKVRYQSRKKLAEQRPRVKGQFVRTVNSDASTKS.

The 119-residue stretch at 38–156 (RVLLVESDYS…ELKNLWQHVW (119 aa)) folds into the Response regulatory domain. 2 stretches are compositionally biased toward polar residues: residues 168–177 (HAQSLPASQH) and 194–203 (DQGSGAQAIN). 3 disordered regions span residues 168–203 (HAQSLPASQHNLEDTDETCEDSRYHSDQGSGAQAIN), 302–416 (VVAL…SRSQ), and 442–468 (RKKLAEQRPRVKGQFVRTVNSDASTKS). Positions 315 to 327 (TPTESHEKLRKVT) are enriched in basic and acidic residues. Positions 328–364 (SDQGSATTSSNQENIGSSSVSFRNQVLQSTVTNQKQD) are enriched in polar residues. 2 stretches are compositionally biased toward basic and acidic residues: residues 371-382 (SNREKAASKEVE) and 400-409 (EKPKEEESAK). A CCT domain is found at 417–459 (REAALMKFRLKRKDRCFDKKVRYQSRKKLAEQRPRVKGQFVRT). The segment covering 458 to 468 (RTVNSDASTKS) has biased composition (polar residues).

The protein belongs to the ARR-like family. In terms of processing, phosphorylated. Phosphorylation varies throughout the diurnal cycle.

Its subcellular location is the nucleus. In terms of biological role, transcriptional repressor of CCA1 and LHY, and positive regulator of LWD1 and LWD2 expression. Controls photoperiodic flowering response and temperature compensation. Involved in the positive and negative feedback loops of the circadian clock. Expression of several members of the ARR-like family is controlled by circadian rhythm. Regulated at the transcriptional level by a corepressor complex consisting of ELF4, ELF3, and LUX. APRR9, APRR7, and APRR5 coordinately act on the upstream region of the target genes to repress their expression from noon until midnight. The particular coordinated sequential expression of APRR9, APRR7, APRR5, APRR3 and APPR1 result to circadian waves that may be at the basis of the endogenous circadian clock. In Arabidopsis thaliana (Mouse-ear cress), this protein is Two-component response regulator-like APRR9 (APRR9).